We begin with the raw amino-acid sequence, 479 residues long: Cardiolipin synthase A (479 aa).

Helical transmembrane passes span 8-28 and 38-58; these read FFGY…LHAV and IAWA…YLIF. PLD phosphodiesterase domains are found at residues 218–245 and 392–419; these read VNFR…GDEY and QPGF…DNRS. Residues His-223, Lys-225, Asp-230, His-397, Lys-399, and Asp-404 contribute to the active site.

This sequence belongs to the phospholipase D family. Cardiolipin synthase subfamily. ClsA sub-subfamily.

It localises to the cell inner membrane. The enzyme catalyses 2 a 1,2-diacyl-sn-glycero-3-phospho-(1'-sn-glycerol) = a cardiolipin + glycerol. Its function is as follows. Catalyzes the reversible phosphatidyl group transfer from one phosphatidylglycerol molecule to another to form cardiolipin (CL) (diphosphatidylglycerol) and glycerol. The chain is Cardiolipin synthase A from Pseudomonas entomophila (strain L48).